A 202-amino-acid polypeptide reads, in one-letter code: T-cell surface glycoprotein CD3 epsilon chain (202 aa).

The first 21 residues, 1 to 21 (MPSGSLWRVLGLCLLSVGAWG), serve as a signal peptide directing secretion. At 22–125 (QEDNEDPLEP…NCVEVDTMTA (104 aa)) the chain is on the extracellular side. One can recognise an Ig-like domain in the interval 33-107 (PQTSASARYK…TSNSLEKNYL (75 aa)). A disulfide bridge connects residues C54 and C96. A helical membrane pass occupies residues 126–146 (VAIVVADVCITLGFLLLVYYW). Topologically, residues 147–202 (SKNKKASSVTMMRGPGAGGRPRGQNKEKPPPVPNPDYEPIRKGQQDLYSGLNQRGI) are cytoplasmic. A disordered region spans residues 156-202 (TMMRGPGAGGRPRGQNKEKPPPVPNPDYEPIRKGQQDLYSGLNQRGI). The segment at 170 to 187 (QNKEKPPPVPNPDYEPIR) is NUMB-binding region. The 28-residue stretch at 173 to 200 (EKPPPVPNPDYEPIRKGQQDLYSGLNQR) folds into the ITAM domain. The segment at 174 to 181 (KPPPVPNP) is proline-rich sequence. Phosphotyrosine is present on residues Y183 and Y194. The span at 192-202 (DLYSGLNQRGI) shows a compositional bias: polar residues.

In terms of assembly, the TCR-CD3 complex is composed of a CD3D/CD3E and a CD3G/CD3E heterodimers that preferentially associate with TCRalpha and TCRbeta, respectively, to form TCRalpha/CD3E/CD3G and TCRbeta/CD3G/CD3E trimers. In turn, the hexamer interacts with CD3Z homodimer to form the TCR-CD3 complex. Alternatively, TCRalpha and TCRbeta can be replaced by TCRgamma and TCRdelta. Interacts with CD6. Interacts (via Proline-rich sequence) with NCK1; the interaction is ligand dependent but independent of tyrosine kinase activation. Phosphorylated on Tyr residues after T-cell receptor triggering by LCK in association with CD4/CD8.

It is found in the cell membrane. In terms of biological role, part of the TCR-CD3 complex present on T-lymphocyte cell surface that plays an essential role in adaptive immune response. When antigen presenting cells (APCs) activate T-cell receptor (TCR), TCR-mediated signals are transmitted across the cell membrane by the CD3 chains CD3D, CD3E, CD3G and CD3Z. All CD3 chains contain immunoreceptor tyrosine-based activation motifs (ITAMs) in their cytoplasmic domain. Upon TCR engagement, these motifs become phosphorylated by Src family protein tyrosine kinases LCK and FYN, resulting in the activation of downstream signaling pathways. In addition of this role of signal transduction in T-cell activation, CD3E plays an essential role in correct T-cell development. Also participates in internalization and cell surface down-regulation of TCR-CD3 complexes via endocytosis sequences present in CD3E cytosolic region. In addition to its role as a TCR coreceptor, it serves as a receptor for ITPRIPL1. Ligand recognition inhibits T-cell activation by promoting interaction with NCK1, which prevents CD3E-ZAP70 interaction and blocks the ERK-NFkB signaling cascade and calcium influx. The chain is T-cell surface glycoprotein CD3 epsilon chain (CD3E) from Felis catus (Cat).